A 262-amino-acid polypeptide reads, in one-letter code: MRFGLNIDHIVTLREIRKTYEPEILEALFIAKNTHKVDLITIHLREDKRHIQNEDVLRLLEISPLPINIECSINAGITDFLCSLKNKPSKVTIVPENRNEVTTEGGLDCSLKGLGEVIRAYHNKGVEVSLFIDPLKDALHFAREHQVKQVEFHTGVYANLHNALYSNANNQIHAISALKDKSPKELKEELHNAFLQLRKMSKEAFFMGITACAGHGLNYSNVKELLKIPSLRELNIGHSVISKAVLVGLEKAILEMAQLIKR.

N6 contacts 3-amino-2-oxopropyl phosphate. 8 to 9 is a binding site for 1-deoxy-D-xylulose 5-phosphate; it reads DH. R17 contacts 3-amino-2-oxopropyl phosphate. The Proton acceptor role is filled by H43. Residues R45 and H50 each coordinate 1-deoxy-D-xylulose 5-phosphate. The active-site Proton acceptor is the E70. Residue T102 coordinates 1-deoxy-D-xylulose 5-phosphate. Residue H215 is the Proton donor of the active site. Residues G216 and 237–238 each bind 3-amino-2-oxopropyl phosphate; that span reads GH.

It belongs to the PNP synthase family. In terms of assembly, homooctamer; tetramer of dimers.

It is found in the cytoplasm. It carries out the reaction 3-amino-2-oxopropyl phosphate + 1-deoxy-D-xylulose 5-phosphate = pyridoxine 5'-phosphate + phosphate + 2 H2O + H(+). The protein operates within cofactor biosynthesis; pyridoxine 5'-phosphate biosynthesis; pyridoxine 5'-phosphate from D-erythrose 4-phosphate: step 5/5. In terms of biological role, catalyzes the complicated ring closure reaction between the two acyclic compounds 1-deoxy-D-xylulose-5-phosphate (DXP) and 3-amino-2-oxopropyl phosphate (1-amino-acetone-3-phosphate or AAP) to form pyridoxine 5'-phosphate (PNP) and inorganic phosphate. The protein is Pyridoxine 5'-phosphate synthase of Helicobacter pylori (strain Shi470).